A 529-amino-acid chain; its full sequence is Type I inositol polyphosphate 5-phosphatase 5 (529 aa).

Catalytic regions lie at residues 371–386 (DRVLWLGDLNYRVALT) and 451–466 (KRRTPAWCDRILWKGE).

The protein belongs to the inositol polyphosphate 5-phosphatase family.

May be involved in the regulation of root hairs development. Required for restricting both the size of the root-hair initiation site and the width of the root hairs during the transition to tip growth, but is not required for normal subsequent tip growth. The sequence is that of Type I inositol polyphosphate 5-phosphatase 5 from Arabidopsis thaliana (Mouse-ear cress).